Reading from the N-terminus, the 290-residue chain is 3-keto-disaccharide hydrolase (290 aa).

An N-terminal signal peptide occupies residues 1 to 19; sequence MKKVFYPLACCLAAGVLVS. A lipid anchor (N-palmitoyl cysteine) is attached at Cys-20. Cys-20 carries the S-diacylglycerol cysteine lipid modification.

The protein resides in the cell membrane. The enzyme catalyses 3-dehydro-alpha,alpha-trehalose + H2O = 3-dehydro-D-glucose + D-glucose. Functionally, 3-keto-disaccharide hydrolase that preferentially hydrolyzes 3-keto-trehalose (3-dehydro-alpha,alpha-trehalose). Important for disaccharide utilization in the human gut. Also shows hydrolysis activity with the glucosinolates glucoraphanin or glucobrassicin, but with much lower efficiency. The protein is 3-keto-disaccharide hydrolase of Bacteroides thetaiotaomicron (strain ATCC 29148 / DSM 2079 / JCM 5827 / CCUG 10774 / NCTC 10582 / VPI-5482 / E50).